The chain runs to 282 residues: MNLINNANKKLFEKINNLKNYSCQVKFSDAIEIEINDFDDNIIDLAKDLKPWRKGPFKLNATLIDSEWQSFIKFNGLKPFLNLKDKIVADVGCNNGYYMFKMLELEPKSIVGFDPSVLSFLQFSFINHFVKSNIKFELLGVQDLPNYNIKFDTILCLGVLYHRSDPIKTLKELKSSLNKGGEVFIDTMFIQRDDEFVLSPKSTYSKIPNIYFIPSIKALRNWCERAKFKTFDILSIKNTDFNEQRKTQWIYGESLENFLDPNDPKLTIEGYPAPKRVYVRLS.

Carboxy-S-adenosyl-L-methionine contacts are provided by residues K54, W68, K73, G92, 114 to 116 (DPS), Y161, and R276.

It belongs to the class I-like SAM-binding methyltransferase superfamily. CmoB family. As to quaternary structure, homotetramer.

The catalysed reaction is carboxy-S-adenosyl-L-methionine + 5-hydroxyuridine(34) in tRNA = 5-carboxymethoxyuridine(34) in tRNA + S-adenosyl-L-homocysteine + H(+). Its function is as follows. Catalyzes carboxymethyl transfer from carboxy-S-adenosyl-L-methionine (Cx-SAM) to 5-hydroxyuridine (ho5U) to form 5-carboxymethoxyuridine (cmo5U) at position 34 in tRNAs. This Campylobacter fetus subsp. fetus (strain 82-40) protein is tRNA U34 carboxymethyltransferase.